The primary structure comprises 123 residues: Modulator protein MzrA (123 aa).

Residues 1–8 (MIKRPRWQ) lie on the Cytoplasmic side of the membrane. The chain crosses the membrane as a helical span at residues 9–29 (YVLLIALALLALATLLVPCMV). Topologically, residues 30–123 (RTESELRIRA…EFARAPLNLG (94 aa)) are periplasmic.

This sequence belongs to the MzrA family. In terms of assembly, interacts with EnvZ.

The protein localises to the cell inner membrane. Its function is as follows. Modulates the activity of the EnvZ/OmpR two-component regulatory system, probably by directly modulating EnvZ enzymatic activity and increasing stability of phosphorylated OmpR. This Serratia proteamaculans (strain 568) protein is Modulator protein MzrA.